The chain runs to 319 residues: MIKLGIVMDPISSINIKKDTSFAMLLEAQRRGWELHYMEMGDLYMRGGDGRARTRRLNVKQDKDNWFSFGAEQDLPLYDLDVILMRKDPPFDTEFIYATYILERAEDKGTLVVNKPQSLRDCNEKLFTAWFPELTPDTLVSRSKDHIRKFHQEHGDIILKPLDGMGGTSIFRVKQDDPNLSVIIETLTELSSRFCMAQNFLPAIKEGDKRVLVVDGEPVPYCLARIPAQGETRGNLAAGGRGEARPLSESDWEIARTVAPILKQKGLIFVGLDIIGDRLTEINVTSPTCVREIEAAFPEISITGMLMDAIERRLADKKA.

The ATP-grasp domain occupies Lys125 to Glu311. His151–Gly207 provides a ligand contact to ATP. 2 residues coordinate Mg(2+): Glu281 and Asn283.

The protein belongs to the prokaryotic GSH synthase family. It depends on Mg(2+) as a cofactor. Mn(2+) serves as cofactor.

The catalysed reaction is gamma-L-glutamyl-L-cysteine + glycine + ATP = glutathione + ADP + phosphate + H(+). Its pathway is sulfur metabolism; glutathione biosynthesis; glutathione from L-cysteine and L-glutamate: step 2/2. In Yersinia pestis, this protein is Glutathione synthetase.